The sequence spans 234 residues: Leucyl/phenylalanyl-tRNA--protein transferase (234 aa).

It belongs to the L/F-transferase family.

It localises to the cytoplasm. It catalyses the reaction N-terminal L-lysyl-[protein] + L-leucyl-tRNA(Leu) = N-terminal L-leucyl-L-lysyl-[protein] + tRNA(Leu) + H(+). The catalysed reaction is N-terminal L-arginyl-[protein] + L-leucyl-tRNA(Leu) = N-terminal L-leucyl-L-arginyl-[protein] + tRNA(Leu) + H(+). The enzyme catalyses L-phenylalanyl-tRNA(Phe) + an N-terminal L-alpha-aminoacyl-[protein] = an N-terminal L-phenylalanyl-L-alpha-aminoacyl-[protein] + tRNA(Phe). Functionally, functions in the N-end rule pathway of protein degradation where it conjugates Leu, Phe and, less efficiently, Met from aminoacyl-tRNAs to the N-termini of proteins containing an N-terminal arginine or lysine. This Hahella chejuensis (strain KCTC 2396) protein is Leucyl/phenylalanyl-tRNA--protein transferase.